A 202-amino-acid polypeptide reads, in one-letter code: Small ribosomal subunit protein uS4c (202 aa).

The S4 RNA-binding domain occupies 90 to 153; that stretch reads MRLDNIIFRL…KSQAIISKNI (64 aa).

The protein belongs to the universal ribosomal protein uS4 family. Part of the 30S ribosomal subunit. Contacts protein S5. The interaction surface between S4 and S5 is involved in control of translational fidelity.

The protein localises to the plastid. The protein resides in the chloroplast. In terms of biological role, one of the primary rRNA binding proteins, it binds directly to 16S rRNA where it nucleates assembly of the body of the 30S subunit. Functionally, with S5 and S12 plays an important role in translational accuracy. In Splachnum sphaericum (Pinkstink dung moss), this protein is Small ribosomal subunit protein uS4c (rps4).